The following is a 441-amino-acid chain: Amino-acid acetyltransferase (441 aa).

The region spanning 295-434 (EQIRRANIND…QALYNYQRRS (140 aa)) is the N-acetyltransferase domain.

Belongs to the acetyltransferase family. ArgA subfamily. Homohexamer.

Its subcellular location is the cytoplasm. The catalysed reaction is L-glutamate + acetyl-CoA = N-acetyl-L-glutamate + CoA + H(+). The protein operates within amino-acid biosynthesis; L-arginine biosynthesis; N(2)-acetyl-L-ornithine from L-glutamate: step 1/4. In Edwardsiella ictaluri (strain 93-146), this protein is Amino-acid acetyltransferase.